The primary structure comprises 339 residues: Glycerol-3-phosphate dehydrogenase [NAD(P)+] (339 aa).

NADPH-binding residues include Ser15, Tyr16, His36, and Lys110. Residues Lys110, Gly139, and Thr141 each contribute to the sn-glycerol 3-phosphate site. NADPH is bound at residue Ala143. Residues Lys195, Asp248, Ser258, Arg259, and Asn260 each coordinate sn-glycerol 3-phosphate. The active-site Proton acceptor is the Lys195. Arg259 contributes to the NADPH binding site. Residues Val283 and Glu285 each contribute to the NADPH site.

This sequence belongs to the NAD-dependent glycerol-3-phosphate dehydrogenase family.

It is found in the cytoplasm. The enzyme catalyses sn-glycerol 3-phosphate + NAD(+) = dihydroxyacetone phosphate + NADH + H(+). It catalyses the reaction sn-glycerol 3-phosphate + NADP(+) = dihydroxyacetone phosphate + NADPH + H(+). The protein operates within membrane lipid metabolism; glycerophospholipid metabolism. In terms of biological role, catalyzes the reduction of the glycolytic intermediate dihydroxyacetone phosphate (DHAP) to sn-glycerol 3-phosphate (G3P), the key precursor for phospholipid synthesis. The polypeptide is Glycerol-3-phosphate dehydrogenase [NAD(P)+] (Escherichia coli O17:K52:H18 (strain UMN026 / ExPEC)).